Reading from the N-terminus, the 186-residue chain is Ribosome-recycling factor (186 aa).

This sequence belongs to the RRF family.

Its subcellular location is the cytoplasm. Functionally, responsible for the release of ribosomes from messenger RNA at the termination of protein biosynthesis. May increase the efficiency of translation by recycling ribosomes from one round of translation to another. The polypeptide is Ribosome-recycling factor (Porphyromonas gingivalis (strain ATCC BAA-308 / W83)).